The primary structure comprises 487 residues: 3-octaprenyl-4-hydroxybenzoate carboxy-lyase (487 aa).

Mn(2+) is bound at residue Asn172. Prenylated FMN-binding positions include 175–177, 189–191, and 194–195; these read IYR, RWL, and RG. Glu238 provides a ligand contact to Mn(2+). Catalysis depends on Asp287, which acts as the Proton donor.

It belongs to the UbiD family. In terms of assembly, homohexamer. The cofactor is prenylated FMN. Mn(2+) is required as a cofactor.

It localises to the cell membrane. The enzyme catalyses a 4-hydroxy-3-(all-trans-polyprenyl)benzoate + H(+) = a 2-(all-trans-polyprenyl)phenol + CO2. Its pathway is cofactor biosynthesis; ubiquinone biosynthesis. In terms of biological role, catalyzes the decarboxylation of 3-octaprenyl-4-hydroxy benzoate to 2-octaprenylphenol, an intermediate step in ubiquinone biosynthesis. The sequence is that of 3-octaprenyl-4-hydroxybenzoate carboxy-lyase from Actinobacillus pleuropneumoniae serotype 5b (strain L20).